The chain runs to 230 residues: Large ribosomal subunit protein uL1 (230 aa).

It belongs to the universal ribosomal protein uL1 family. Part of the 50S ribosomal subunit.

Its function is as follows. Binds directly to 23S rRNA. The L1 stalk is quite mobile in the ribosome, and is involved in E site tRNA release. In terms of biological role, protein L1 is also a translational repressor protein, it controls the translation of the L11 operon by binding to its mRNA. This is Large ribosomal subunit protein uL1 from Nitrosospira multiformis (strain ATCC 25196 / NCIMB 11849 / C 71).